The sequence spans 309 residues: tRNA dimethylallyltransferase (309 aa).

10 to 17 serves as a coordination point for ATP; it reads GPTAVGKT. Residue 12–17 coordinates substrate; that stretch reads TAVGKT. Residues 35-38 form an interaction with substrate tRNA region; that stretch reads DSMQ.

This sequence belongs to the IPP transferase family. Monomer. Requires Mg(2+) as cofactor.

The catalysed reaction is adenosine(37) in tRNA + dimethylallyl diphosphate = N(6)-dimethylallyladenosine(37) in tRNA + diphosphate. In terms of biological role, catalyzes the transfer of a dimethylallyl group onto the adenine at position 37 in tRNAs that read codons beginning with uridine, leading to the formation of N6-(dimethylallyl)adenosine (i(6)A). This is tRNA dimethylallyltransferase from Clostridium botulinum (strain Alaska E43 / Type E3).